Reading from the N-terminus, the 41-residue chain is Large ribosomal subunit protein bL36 (41 aa).

The protein belongs to the bacterial ribosomal protein bL36 family.

The chain is Large ribosomal subunit protein bL36 from Rhodopseudomonas palustris (strain BisA53).